A 182-amino-acid chain; its full sequence is Large ribosomal subunit protein uL10 (182 aa).

The protein belongs to the universal ribosomal protein uL10 family. Part of the ribosomal stalk of the 50S ribosomal subunit. The N-terminus interacts with L11 and the large rRNA to form the base of the stalk. The C-terminus forms an elongated spine to which L12 dimers bind in a sequential fashion forming a multimeric L10(L12)X complex.

Forms part of the ribosomal stalk, playing a central role in the interaction of the ribosome with GTP-bound translation factors. This is Large ribosomal subunit protein uL10 from Gluconacetobacter diazotrophicus (strain ATCC 49037 / DSM 5601 / CCUG 37298 / CIP 103539 / LMG 7603 / PAl5).